We begin with the raw amino-acid sequence, 611 residues long: Dihydroxy-acid dehydratase (611 aa).

D81 is a Mg(2+) binding site. C122 provides a ligand contact to [2Fe-2S] cluster. The Mg(2+) site is built by D123 and K124. K124 is subject to N6-carboxylysine. Residue C195 participates in [2Fe-2S] cluster binding. E491 is a Mg(2+) binding site. The Proton acceptor role is filled by S517.

Belongs to the IlvD/Edd family. As to quaternary structure, homodimer. Requires [2Fe-2S] cluster as cofactor. Mg(2+) serves as cofactor.

The enzyme catalyses (2R)-2,3-dihydroxy-3-methylbutanoate = 3-methyl-2-oxobutanoate + H2O. It carries out the reaction (2R,3R)-2,3-dihydroxy-3-methylpentanoate = (S)-3-methyl-2-oxopentanoate + H2O. It participates in amino-acid biosynthesis; L-isoleucine biosynthesis; L-isoleucine from 2-oxobutanoate: step 3/4. The protein operates within amino-acid biosynthesis; L-valine biosynthesis; L-valine from pyruvate: step 3/4. Functions in the biosynthesis of branched-chain amino acids. Catalyzes the dehydration of (2R,3R)-2,3-dihydroxy-3-methylpentanoate (2,3-dihydroxy-3-methylvalerate) into 2-oxo-3-methylpentanoate (2-oxo-3-methylvalerate) and of (2R)-2,3-dihydroxy-3-methylbutanoate (2,3-dihydroxyisovalerate) into 2-oxo-3-methylbutanoate (2-oxoisovalerate), the penultimate precursor to L-isoleucine and L-valine, respectively. In Actinobacillus pleuropneumoniae serotype 5b (strain L20), this protein is Dihydroxy-acid dehydratase.